Here is a 320-residue protein sequence, read N- to C-terminus: NAC domain-containing protein 20 (320 aa).

The NAC domain maps to 14–170; that stretch reads LPPGFRFHPT…DWAVCRIFHK (157 aa). Residues 114-176 mediate DNA binding; that stretch reads IGMKKTLVFY…IFHKSSGIKK (63 aa).

In terms of assembly, forms homodimers. Forms heterodimers with NAC26. In terms of tissue distribution, expressed in developing seeds.

The protein localises to the nucleus. Its subcellular location is the endoplasmic reticulum. Functionally, transcription factor that acts redundantly with NAC26 to regulate the expression of genes involved in the biosynthesis of starch and storage proteins in grain. Directly binds to the promoters of starch synthase 1 (SS1), pullulanase (PUL), glutelin A1 (GLUA1), glutelins B4 and B5 (GLUB4 and GLUB5), alpha-globulin and 16 kDa prolamin, and activates their expression. Possesses transactivation activity in yeast. The sequence is that of NAC domain-containing protein 20 from Oryza sativa subsp. indica (Rice).